Here is a 229-residue protein sequence, read N- to C-terminus: Ribonuclease 3 (229 aa).

The RNase III domain maps to 5-127 (LARLERKLGY…LIGAIYLDAD (123 aa)). Glutamate 40 is a Mg(2+) binding site. Aspartate 44 is an active-site residue. Positions 113 and 116 each coordinate Mg(2+). The active site involves glutamate 116. The DRBM domain occupies 154 to 224 (DPKTRLQEFL…AAAALIALGV (71 aa)).

This sequence belongs to the ribonuclease III family. Homodimer. The cofactor is Mg(2+).

The protein localises to the cytoplasm. It carries out the reaction Endonucleolytic cleavage to 5'-phosphomonoester.. Functionally, digests double-stranded RNA. Involved in the processing of primary rRNA transcript to yield the immediate precursors to the large and small rRNAs (23S and 16S). Processes some mRNAs, and tRNAs when they are encoded in the rRNA operon. Processes pre-crRNA and tracrRNA of type II CRISPR loci if present in the organism. The polypeptide is Ribonuclease 3 (Pseudomonas putida (strain W619)).